The chain runs to 602 residues: Aspartate--tRNA(Asp/Asn) ligase (602 aa).

Glu-176 contributes to the L-aspartate binding site. Residues 200–203 form an aspartate region; the sequence is QQFK. The L-aspartate site is built by Arg-222 and His-452. ATP is bound at residue 222-224; that stretch reads RDE. Glu-490 contacts ATP. Residue Arg-497 participates in L-aspartate binding. 542-545 provides a ligand contact to ATP; that stretch reads GIDR.

The protein belongs to the class-II aminoacyl-tRNA synthetase family. Type 1 subfamily. Homodimer.

The protein localises to the cytoplasm. It carries out the reaction tRNA(Asx) + L-aspartate + ATP = L-aspartyl-tRNA(Asx) + AMP + diphosphate. Its function is as follows. Aspartyl-tRNA synthetase with relaxed tRNA specificity since it is able to aspartylate not only its cognate tRNA(Asp) but also tRNA(Asn). Reaction proceeds in two steps: L-aspartate is first activated by ATP to form Asp-AMP and then transferred to the acceptor end of tRNA(Asp/Asn). The protein is Aspartate--tRNA(Asp/Asn) ligase of Rickettsia canadensis (strain McKiel).